The primary structure comprises 555 residues: Formate--tetrahydrofolate ligase (555 aa).

Position 65-72 (65-72) interacts with ATP; that stretch reads TPAGEGKS.

It belongs to the formate--tetrahydrofolate ligase family.

It carries out the reaction (6S)-5,6,7,8-tetrahydrofolate + formate + ATP = (6R)-10-formyltetrahydrofolate + ADP + phosphate. It participates in one-carbon metabolism; tetrahydrofolate interconversion. The protein is Formate--tetrahydrofolate ligase of Staphylococcus aureus (strain MRSA252).